A 189-amino-acid polypeptide reads, in one-letter code: Peptidyl-tRNA hydrolase (189 aa).

Position 15 (Y15) interacts with tRNA. H20 serves as the catalytic Proton acceptor. Residues Y65, N67, and N113 each coordinate tRNA.

It belongs to the PTH family. Monomer.

It localises to the cytoplasm. It catalyses the reaction an N-acyl-L-alpha-aminoacyl-tRNA + H2O = an N-acyl-L-amino acid + a tRNA + H(+). In terms of biological role, hydrolyzes ribosome-free peptidyl-tRNAs (with 1 or more amino acids incorporated), which drop off the ribosome during protein synthesis, or as a result of ribosome stalling. Functionally, catalyzes the release of premature peptidyl moieties from peptidyl-tRNA molecules trapped in stalled 50S ribosomal subunits, and thus maintains levels of free tRNAs and 50S ribosomes. The protein is Peptidyl-tRNA hydrolase of Caldicellulosiruptor bescii (strain ATCC BAA-1888 / DSM 6725 / KCTC 15123 / Z-1320) (Anaerocellum thermophilum).